The following is a 597-amino-acid chain: Elongation factor 4 (597 aa).

The 183-residue stretch at 2 to 184 (DHIRNFSIIA…ALIAKVPPPK (183 aa)) folds into the tr-type G domain. GTP is bound by residues 14–19 (DHGKST) and 131–134 (NKID).

The protein belongs to the TRAFAC class translation factor GTPase superfamily. Classic translation factor GTPase family. LepA subfamily.

Its subcellular location is the cell inner membrane. It carries out the reaction GTP + H2O = GDP + phosphate + H(+). Functionally, required for accurate and efficient protein synthesis under certain stress conditions. May act as a fidelity factor of the translation reaction, by catalyzing a one-codon backward translocation of tRNAs on improperly translocated ribosomes. Back-translocation proceeds from a post-translocation (POST) complex to a pre-translocation (PRE) complex, thus giving elongation factor G a second chance to translocate the tRNAs correctly. Binds to ribosomes in a GTP-dependent manner. The sequence is that of Elongation factor 4 from Cupriavidus pinatubonensis (strain JMP 134 / LMG 1197) (Cupriavidus necator (strain JMP 134)).